The primary structure comprises 227 residues: Protein MobD (227 aa).

The sequence is that of Protein MobD (mobD) from Acidithiobacillus ferrooxidans (Thiobacillus ferrooxidans).